A 229-amino-acid polypeptide reads, in one-letter code: Ribonuclease 3 (229 aa).

The region spanning 5 to 127 is the RNase III domain; the sequence is LDRLERKLGY…LIGAIYLDTG (123 aa). Residue E40 coordinates Mg(2+). Residue D44 is part of the active site. Residues D113 and E116 each contribute to the Mg(2+) site. The active site involves E116. The 71-residue stretch at 154–224 folds into the DRBM domain; sequence DPKTRLQEFL…AAAALVALGV (71 aa).

The protein belongs to the ribonuclease III family. Homodimer. Requires Mg(2+) as cofactor.

Its subcellular location is the cytoplasm. It carries out the reaction Endonucleolytic cleavage to 5'-phosphomonoester.. In terms of biological role, digests double-stranded RNA. Involved in the processing of primary rRNA transcript to yield the immediate precursors to the large and small rRNAs (23S and 16S). Processes some mRNAs, and tRNAs when they are encoded in the rRNA operon. Processes pre-crRNA and tracrRNA of type II CRISPR loci if present in the organism. In Pseudomonas paraeruginosa (strain DSM 24068 / PA7) (Pseudomonas aeruginosa (strain PA7)), this protein is Ribonuclease 3.